The sequence spans 157 residues: RNA-binding protein 3 (157 aa).

The region spanning 6-84 (GKLFVGGLNF…RQIRVDHAGK (79 aa)) is the RRM domain. Arg-47 is subject to Omega-N-methylarginine. Residues 81-157 (HAGKSARGTR…GGNYRDNYDN (77 aa)) form a disordered region. Arg-105 is modified (asymmetric dimethylarginine; alternate). Arg-105 carries the post-translational modification Dimethylated arginine; in A2780 ovarian carcinoma cell line. Position 105 is an omega-N-methylarginine; alternate (Arg-105). The span at 105–114 (RGGGDQGYGS) shows a compositional bias: gly residues. Arg-121 and Arg-131 each carry omega-N-methylarginine. Ser-147 carries the phosphoserine modification. The residue at position 155 (Tyr-155) is a Phosphotyrosine.

As to quaternary structure, interacts with RPL4. Associates with the 60S ribosomal subunits in an RNA-independent manner. Associates with ribosomes. In terms of processing, arg-105 is dimethylated, probably to asymmetric dimethylarginine. Post-translationally, phosphorylated.

Its subcellular location is the nucleus. The protein localises to the cytoplasm. The protein resides in the cell projection. It is found in the dendrite. Cold-inducible mRNA binding protein that enhances global protein synthesis at both physiological and mild hypothermic temperatures. Reduces the relative abundance of microRNAs, when overexpressed. Enhances phosphorylation of translation initiation factors and active polysome formation. In Homo sapiens (Human), this protein is RNA-binding protein 3 (RBM3).